A 215-amino-acid polypeptide reads, in one-letter code: CASP-like protein 1U3 (215 aa).

The Cytoplasmic segment spans residues 1–13; that stretch reads MHDEEKKEPKWVT. Residues 14–34 traverse the membrane as a helical segment; that stretch reads AVSIAGRIAGMGLAVAAAVLM. The Extracellular portion of the chain corresponds to 35–68; it reads STASQCTVYYAAPAASAYGGAARARTVTYSDFPP. The helical transmembrane segment at 69 to 89 threads the bilayer; that stretch reads FVFLVGAASIAAFLEAIAIFL. Residues 90-105 lie on the Cytoplasmic side of the membrane; it reads VVWKKGKDKTTKVLMP. A helical transmembrane segment spans residues 106–126; that stretch reads LLGVAVPALLYSATGAAFAAV. Residues 127 to 161 are Extracellular-facing; sequence SDMSYCSANGKRVSICAGSAAAGGGVSGGTNFCSQ. The chain crosses the membrane as a helical span at residues 162-182; it reads VHIAVYLSLAAAVAVSVAEVV. Over 183–215 the chain is Cytoplasmic; it reads RGLGGSASGGGSDSDSSSSSESGGCDHGCHHKH. The tract at residues 187–215 is disordered; it reads GSASGGGSDSDSSSSSESGGCDHGCHHKH. The span at 195–205 shows a compositional bias: low complexity; that stretch reads DSDSSSSSESG.

It belongs to the Casparian strip membrane proteins (CASP) family. In terms of assembly, homodimer and heterodimers.

It is found in the cell membrane. This is CASP-like protein 1U3 from Sorghum bicolor (Sorghum).